The following is a 430-amino-acid chain: Septin-14 (430 aa).

One can recognise a Septin-type G domain in the interval Lys48–Lys313. The interval Gly58 to Thr65 is G1 motif. GTP-binding positions include Gly58–Thr65, Gly113, Lys194–Asp202, Gly246, and Arg261. Positions Lys110 to Gly113 are G3 motif. Residues Ala193–Asp196 form a G4 motif region. The stretch at Gln329–Ala410 forms a coiled coil. The required for interaction with SEPTIN4. Required for migration of cortical neurons during corticogenesis stretch occupies residues Asp367 to Lys430.

It belongs to the TRAFAC class TrmE-Era-EngA-EngB-Septin-like GTPase superfamily. Septin GTPase family. In terms of assembly, septins polymerize into heterooligomeric protein complexes that form filaments, and can associate with cellular membranes, actin filaments and microtubules. GTPase activity is required for filament formation. Interacts with ACTN4. Interacts with SEPTIN9. Interacts (via C-terminus) with SEPTIN4. As to expression, expressed in the testis and brain including the cerebrum, hippocampus and cerebellum (at protein level).

The protein localises to the cytoplasm. It is found in the cytoskeleton. The protein resides in the cell projection. Its subcellular location is the axon. It localises to the dendrite. The protein localises to the perikaryon. It is found in the perinuclear region. The protein resides in the cytoplasmic vesicle. Its subcellular location is the secretory vesicle. It localises to the acrosome. In terms of biological role, filament-forming cytoskeletal GTPase. Involved in the migration of cortical neurons and the formation of neuron leading processes during embryonic development. Plays a role in sperm head formation during spermiogenesis, potentially via facilitating localization of ACTN4 to cell filaments. The polypeptide is Septin-14 (Mus musculus (Mouse)).